A 271-amino-acid polypeptide reads, in one-letter code: Regulatory protein RecX (271 aa).

It belongs to the RecX family.

It is found in the cytoplasm. Modulates RecA activity. In Lactobacillus johnsonii (strain CNCM I-12250 / La1 / NCC 533), this protein is Regulatory protein RecX.